Here is a 302-residue protein sequence, read N- to C-terminus: Large ribosomal subunit protein uL4m (302 aa).

It belongs to the universal ribosomal protein uL4 family. Component of the mitochondrial ribosome large subunit (39S) which comprises a 16S rRNA and about 50 distinct proteins.

Its subcellular location is the mitochondrion. This chain is Large ribosomal subunit protein uL4m (mrpl4), found in Danio rerio (Zebrafish).